We begin with the raw amino-acid sequence, 286 residues long: Thymidylate synthase (286 aa).

Residue arginine 21 coordinates dUMP. Residue asparagine 51 participates in (6R)-5,10-methylene-5,6,7,8-tetrahydrofolate binding. 150–151 is a binding site for dUMP; it reads RR. Catalysis depends on cysteine 170, which acts as the Nucleophile. Residues 190–193, asparagine 201, and 231–233 each bind dUMP; these read RSAD and HIY. Aspartate 193 serves as a coordination point for (6R)-5,10-methylene-5,6,7,8-tetrahydrofolate. Alanine 285 provides a ligand contact to (6R)-5,10-methylene-5,6,7,8-tetrahydrofolate.

The protein belongs to the thymidylate synthase family. Bacterial-type ThyA subfamily. Homodimer.

It localises to the cytoplasm. It catalyses the reaction dUMP + (6R)-5,10-methylene-5,6,7,8-tetrahydrofolate = 7,8-dihydrofolate + dTMP. The protein operates within pyrimidine metabolism; dTTP biosynthesis. Its function is as follows. Catalyzes the reductive methylation of 2'-deoxyuridine-5'-monophosphate (dUMP) to 2'-deoxythymidine-5'-monophosphate (dTMP) while utilizing 5,10-methylenetetrahydrofolate (mTHF) as the methyl donor and reductant in the reaction, yielding dihydrofolate (DHF) as a by-product. This enzymatic reaction provides an intracellular de novo source of dTMP, an essential precursor for DNA biosynthesis. The protein is Thymidylate synthase of Mycoplasmopsis pulmonis (strain UAB CTIP) (Mycoplasma pulmonis).